The sequence spans 198 residues: Nucleoid occlusion factor SlmA (198 aa).

One can recognise an HTH tetR-type domain in the interval 10-70 (NRREEILQSL…SLIEFIEDSL (61 aa)). The H-T-H motif DNA-binding region spans 33–52 (TTAKLAASVGVSEAALYRHF). Residues 117 to 144 (EQDRLQGRINQLFERIEAQLRQVLREKR) adopt a coiled-coil conformation.

Belongs to the nucleoid occlusion factor SlmA family. In terms of assembly, homodimer. Interacts with FtsZ.

Its subcellular location is the cytoplasm. The protein localises to the nucleoid. Required for nucleoid occlusion (NO) phenomenon, which prevents Z-ring formation and cell division over the nucleoid. Acts as a DNA-associated cell division inhibitor that binds simultaneously chromosomal DNA and FtsZ, and disrupts the assembly of FtsZ polymers. SlmA-DNA-binding sequences (SBS) are dispersed on non-Ter regions of the chromosome, preventing FtsZ polymerization at these regions. The sequence is that of Nucleoid occlusion factor SlmA from Salmonella dublin (strain CT_02021853).